A 522-amino-acid chain; its full sequence is Protein nucleotidyltransferase YdiU (522 aa).

ATP is bound by residues G109, G111, R112, K132, D144, G145, R195, and R202. D271 serves as the catalytic Proton acceptor. Mg(2+) is bound by residues N272 and D281. D281 lines the ATP pocket.

It belongs to the SELO family. Mg(2+) is required as a cofactor. Mn(2+) serves as cofactor.

The catalysed reaction is L-seryl-[protein] + ATP = 3-O-(5'-adenylyl)-L-seryl-[protein] + diphosphate. The enzyme catalyses L-threonyl-[protein] + ATP = 3-O-(5'-adenylyl)-L-threonyl-[protein] + diphosphate. It carries out the reaction L-tyrosyl-[protein] + ATP = O-(5'-adenylyl)-L-tyrosyl-[protein] + diphosphate. It catalyses the reaction L-histidyl-[protein] + UTP = N(tele)-(5'-uridylyl)-L-histidyl-[protein] + diphosphate. The catalysed reaction is L-seryl-[protein] + UTP = O-(5'-uridylyl)-L-seryl-[protein] + diphosphate. The enzyme catalyses L-tyrosyl-[protein] + UTP = O-(5'-uridylyl)-L-tyrosyl-[protein] + diphosphate. Functionally, nucleotidyltransferase involved in the post-translational modification of proteins. It can catalyze the addition of adenosine monophosphate (AMP) or uridine monophosphate (UMP) to a protein, resulting in modifications known as AMPylation and UMPylation. This Burkholderia ambifaria (strain ATCC BAA-244 / DSM 16087 / CCUG 44356 / LMG 19182 / AMMD) (Burkholderia cepacia (strain AMMD)) protein is Protein nucleotidyltransferase YdiU.